Reading from the N-terminus, the 603-residue chain is ATP-dependent RNA helicase MRH4, mitochondrial (603 aa).

The N-terminal 71 residues, 1–71 (MISTGLPLFT…GNGAGAGARV (71 aa)), are a transit peptide targeting the mitochondrion. A Q motif motif is present at residues 151–158 (VIKPTPVQ). Positions 193–409 (KNEEQKTKIF…LRLFPDQKSL (217 aa)) constitute a Helicase ATP-binding domain. 206-213 (AETGSGKT) is a binding site for ATP. A DEAD box motif is present at residues 357–360 (DEAD). A Helicase C-terminal domain is found at 443-603 (CLAQAIYAIS…SAIMKGSRIG (161 aa)).

It belongs to the DEAD box helicase family. MRH4 subfamily.

The protein resides in the mitochondrion. The catalysed reaction is ATP + H2O = ADP + phosphate + H(+). Functionally, ATP-binding RNA helicase involved in mitochondrial RNA metabolism. Required for maintenance of mitochondrial DNA. The chain is ATP-dependent RNA helicase MRH4, mitochondrial (MRH4) from Lodderomyces elongisporus (strain ATCC 11503 / CBS 2605 / JCM 1781 / NBRC 1676 / NRRL YB-4239) (Yeast).